We begin with the raw amino-acid sequence, 95 residues long: Large ribosomal subunit protein bL25 (95 aa).

The protein belongs to the bacterial ribosomal protein bL25 family. As to quaternary structure, part of the 50S ribosomal subunit; part of the 5S rRNA/L5/L18/L25 subcomplex. Contacts the 5S rRNA. Binds to the 5S rRNA independently of L5 and L18.

Functionally, this is one of the proteins that binds to the 5S RNA in the ribosome where it forms part of the central protuberance. The chain is Large ribosomal subunit protein bL25 from Shewanella oneidensis (strain ATCC 700550 / JCM 31522 / CIP 106686 / LMG 19005 / NCIMB 14063 / MR-1).